Reading from the N-terminus, the 214-residue chain is Adenylate kinase (214 aa).

ATP is bound at residue 10 to 15; the sequence is GAGKGT. The NMP stretch occupies residues 30–59; the sequence is STGDMLRAAVKAGTPLGLEAKKVMDAGQLV. Residues Thr-31, Arg-36, 57 to 59, 85 to 88, and Gln-92 contribute to the AMP site; these read QLV and GFPR. An LID region spans residues 122–159; sequence GRRVHPGSGRVYHIVFNQPKVEGKDDVTGEDLAIRPDD. Residues Arg-123 and 132 to 133 each bind ATP; that span reads VY. AMP-binding residues include Arg-156 and Arg-167. Gln-200 serves as a coordination point for ATP.

The protein belongs to the adenylate kinase family. In terms of assembly, monomer.

It is found in the cytoplasm. It carries out the reaction AMP + ATP = 2 ADP. Its pathway is purine metabolism; AMP biosynthesis via salvage pathway; AMP from ADP: step 1/1. In terms of biological role, catalyzes the reversible transfer of the terminal phosphate group between ATP and AMP. Plays an important role in cellular energy homeostasis and in adenine nucleotide metabolism. This chain is Adenylate kinase, found in Shewanella woodyi (strain ATCC 51908 / MS32).